Consider the following 225-residue polypeptide: MOB-like protein phocein (225 aa).

Residues Cys92, Cys97, Cys110, His113, Cys119, His127, His169, and His174 each contribute to the Zn(2+) site.

It belongs to the MOB1/phocein family. Binds STRN4. Interacts with DNM1 and EPS15. Interacts with nucleoside diphosphate kinase. Interacts with CTTNBP2. Interacts with CTTNBP2NL. Part of the core of STRIPAK complexes composed of PP2A catalytic and scaffolding subunits, the striatins (PP2A regulatory subunits), the striatin-associated proteins MOB4, STRIP1 and STRIP2, PDCD10 and members of the STE20 kinases, such as STK24 and STK26. Post-translationally, phosphorylated on serine residues. In terms of tissue distribution, highly expressed in adrenal gland, spinal cord, brain and cerebellum. Detected at lower levels in heart and skeletal muscle, and at very low levels in spleen, liver and intestine.

It localises to the cytoplasm. The protein resides in the membrane. Its subcellular location is the golgi apparatus. It is found in the golgi stack membrane. Its function is as follows. Part of the striatin-interacting phosphatase and kinase (STRIPAK) complexes. STRIPAK complexes have critical roles in protein (de)phosphorylation and are regulators of multiple signaling pathways including Hippo, MAPK, nuclear receptor and cytoskeleton remodeling. Different types of STRIPAK complexes are involved in a variety of biological processes such as cell growth, differentiation, apoptosis, metabolism and immune regulation. The polypeptide is MOB-like protein phocein (Mob4) (Rattus norvegicus (Rat)).